Here is an 898-residue protein sequence, read N- to C-terminus: Phosphoenolpyruvate carboxylase (898 aa).

Residues histidine 138 and lysine 561 contribute to the active site.

The protein belongs to the PEPCase type 1 family. Mg(2+) is required as a cofactor.

The catalysed reaction is oxaloacetate + phosphate = phosphoenolpyruvate + hydrogencarbonate. Its function is as follows. Forms oxaloacetate, a four-carbon dicarboxylic acid source for the tricarboxylic acid cycle. In Streptococcus suis (strain 98HAH33), this protein is Phosphoenolpyruvate carboxylase.